We begin with the raw amino-acid sequence, 525 residues long: MAEIKPAEISAILRKQVEGFESGATLEEVGTVLQVGDGIARVYGLSNVQYGELVEFDNGMEGIVLNLEEDNVGVVLLGPSTGIKEGSTAKRTQRIASLKVGEQMVGRVVNTLGFPIDGKGPIGGDLYEMPLERKAPGVIFRQPVTEPLQTGVKAVDAMIPVGRGQRELVIGDRQTGKSTVCIDTILNQKEFYDAGKPVFCIYVAIGQKASTVAGIAKMLEEKGAMAYTVIVAANASDPAPMQVYAPFAGAAIGEYFRDSGRPALIVYDDLSKQAVAYREVSLLLRRPPGREAYPGDVFYLHSRLLERACKVIADDGIAKNMNDLPESIKPIVKGGGSLTALPIIETQAGDVSAYIPTNVISITDGQIFLDGDLFNSGVRPAINVGISVSRVGGNAQIKSMKKVSGTLKLDQAQFRELEAFAKFGSDLDSVTLNVIEKGKRNVEILKQGLNDPYTVENQVAIIYAGSKNLLRNVPVEKVKEFEADFLAYLNSKHKDTLNALKAGKLDDSITDVIEKAAKEISAKYN.

171 to 178 (GDRQTGKS) contacts ATP.

This sequence belongs to the ATPase alpha/beta chains family. In terms of assembly, F-type ATPases have 2 components, CF(1) - the catalytic core - and CF(0) - the membrane proton channel. CF(1) has five subunits: alpha(3), beta(3), gamma(1), delta(1), epsilon(1). CF(0) has three main subunits: a(1), b(2) and c(9-12). The alpha and beta chains form an alternating ring which encloses part of the gamma chain. CF(1) is attached to CF(0) by a central stalk formed by the gamma and epsilon chains, while a peripheral stalk is formed by the delta and b chains.

Its subcellular location is the cell inner membrane. It carries out the reaction ATP + H2O + 4 H(+)(in) = ADP + phosphate + 5 H(+)(out). In terms of biological role, produces ATP from ADP in the presence of a proton gradient across the membrane. The alpha chain is a regulatory subunit. This is ATP synthase subunit alpha from Flavobacterium johnsoniae (strain ATCC 17061 / DSM 2064 / JCM 8514 / BCRC 14874 / CCUG 350202 / NBRC 14942 / NCIMB 11054 / UW101) (Cytophaga johnsonae).